Reading from the N-terminus, the 430-residue chain is Adenylosuccinate synthetase (430 aa).

Residues 12–18 (GDEGKGK) and 40–42 (GHT) each bind GTP. Aspartate 13 (proton acceptor) is an active-site residue. Aspartate 13 and glycine 40 together coordinate Mg(2+). IMP is bound by residues 13 to 16 (DEGK), 38 to 41 (NAGH), threonine 129, arginine 143, glutamine 224, threonine 239, and arginine 303. Histidine 41 serves as the catalytic Proton donor. 299 to 305 (TVSNRKR) provides a ligand contact to substrate. GTP contacts are provided by residues arginine 305, 331–333 (KLD), and 413–415 (STG).

It belongs to the adenylosuccinate synthetase family. As to quaternary structure, homodimer. Requires Mg(2+) as cofactor.

It localises to the cytoplasm. The catalysed reaction is IMP + L-aspartate + GTP = N(6)-(1,2-dicarboxyethyl)-AMP + GDP + phosphate + 2 H(+). Its pathway is purine metabolism; AMP biosynthesis via de novo pathway; AMP from IMP: step 1/2. In terms of biological role, plays an important role in the de novo pathway of purine nucleotide biosynthesis. Catalyzes the first committed step in the biosynthesis of AMP from IMP. The chain is Adenylosuccinate synthetase from Ehrlichia chaffeensis (strain ATCC CRL-10679 / Arkansas).